Reading from the N-terminus, the 149-residue chain is UPF0336 protein Lxx02810 (149 aa).

This sequence belongs to the UPF0336 family.

The polypeptide is UPF0336 protein Lxx02810 (Leifsonia xyli subsp. xyli (strain CTCB07)).